We begin with the raw amino-acid sequence, 352 residues long: Aromatic amino acid aminotransferase (352 aa).

Position 217 is an N6-(pyridoxal phosphate)lysine (lysine 217).

The protein belongs to the class-II pyridoxal-phosphate-dependent aminotransferase family. As to quaternary structure, homodimer. The cofactor is pyridoxal 5'-phosphate.

It catalyses the reaction an aromatic L-alpha-amino acid + 2-oxoglutarate = an aromatic oxo-acid + L-glutamate. Functionally, aminotransferase that catalyzes the conversion of aromatic amino acids and 2-oxoglutarate into corresponding aromatic oxo acids and L-glutamate. The polypeptide is Aromatic amino acid aminotransferase (Cutibacterium acnes (strain DSM 16379 / KPA171202) (Propionibacterium acnes)).